Reading from the N-terminus, the 500-residue chain is Cholesterol 24-hydroxylase (500 aa).

The chain crosses the membrane as a helical span at residues 3–23; it reads PGLLLLGSAVLLAFGLCCTFV. Heme is bound at residue Cys-437.

The protein belongs to the cytochrome P450 family. Heme is required as a cofactor. As to expression, expressed in high level in the pyramidal cells of the hippocampus, Purkinje cells of the cerebellum, and neuronal cell bodies in layers II/III, V, and VI of the cortex. Expressed in hippocampal and cerebellar interneurons, in retinal ganglion cells, and in a subset of retinal cells localized to the inner nuclear layer (at protein level).

The protein resides in the endoplasmic reticulum membrane. It is found in the microsome membrane. It localises to the postsynapse. The protein localises to the presynapse. Its subcellular location is the cell projection. The protein resides in the dendrite. The catalysed reaction is cholesterol + reduced [NADPH--hemoprotein reductase] + O2 = (24S)-hydroxycholesterol + oxidized [NADPH--hemoprotein reductase] + H2O + H(+). It catalyses the reaction cholestanol + reduced [NADPH--hemoprotein reductase] + O2 = (24S)-hydroxycholestanol + oxidized [NADPH--hemoprotein reductase] + H2O + H(+). It carries out the reaction 7-dehydrocholesterol + reduced [NADPH--hemoprotein reductase] + O2 = cholesta-5,7-dien-3beta,24S-diol + oxidized [NADPH--hemoprotein reductase] + H2O + H(+). The enzyme catalyses 7-dehydrocholesterol + reduced [NADPH--hemoprotein reductase] + O2 = cholesta-5,7-dien-3beta,25-diol + oxidized [NADPH--hemoprotein reductase] + H2O + H(+). The catalysed reaction is desmosterol + reduced [NADPH--hemoprotein reductase] + O2 = (24Z),26-hydroxydesmosterol + oxidized [NADPH--hemoprotein reductase] + H2O + H(+). It catalyses the reaction desmosterol + reduced [NADPH--hemoprotein reductase] + O2 = (24S)-25-epoxycholesterol + oxidized [NADPH--hemoprotein reductase] + H2O + H(+). It carries out the reaction 4beta-hydroxycholesterol + reduced [NADPH--hemoprotein reductase] + O2 = 4beta,24S-dihydroxycholesterol + oxidized [NADPH--hemoprotein reductase] + H2O + H(+). The enzyme catalyses (24S)-hydroxycholesterol + reduced [NADPH--hemoprotein reductase] + O2 = (24S,25R)-24,26-dihydroxycholesterol + oxidized [NADPH--hemoprotein reductase] + H2O + H(+). The catalysed reaction is (24S)-hydroxycholesterol + reduced [NADPH--hemoprotein reductase] + O2 = 24S,25-dihydroxycholesterol + oxidized [NADPH--hemoprotein reductase] + H2O + H(+). It catalyses the reaction 7alpha-hydroxycholesterol + reduced [NADPH--hemoprotein reductase] + O2 = (24S)-7alpha-dihydroxycholesterol + oxidized [NADPH--hemoprotein reductase] + H2O + H(+). It carries out the reaction progesterone + reduced [NADPH--hemoprotein reductase] + O2 = 17alpha-hydroxyprogesterone + oxidized [NADPH--hemoprotein reductase] + H2O + H(+). The enzyme catalyses testosterone + reduced [NADPH--hemoprotein reductase] + O2 = 16beta,17beta-dihydroxyandrost-4-en-3-one + oxidized [NADPH--hemoprotein reductase] + H2O + H(+). The catalysed reaction is testosterone + reduced [NADPH--hemoprotein reductase] + O2 = 2-hydroxytestosterone + oxidized [NADPH--hemoprotein reductase] + H2O + H(+). It catalyses the reaction testosterone + reduced [NADPH--hemoprotein reductase] + O2 = 6beta,17beta-dihydroxyandrost-4-en-3-one + oxidized [NADPH--hemoprotein reductase] + H2O + H(+). It participates in steroid metabolism; cholesterol degradation. The protein operates within lipid metabolism; C21-steroid hormone metabolism. Functionally, P450 monooxygenase that plays a major role in cholesterol homeostasis in the brain. Primarily catalyzes the hydroxylation (with S stereochemistry) at C-24 of cholesterol side chain, triggering cholesterol diffusion out of neurons and its further degradation. By promoting constant cholesterol elimination in neurons, may activate the mevalonate pathway and coordinate the synthesis of new cholesterol and nonsterol isoprenoids involved in synaptic activity and learning. Further hydroxylates cholesterol derivatives and hormone steroids on both the ring and side chain of these molecules, converting them into active oxysterols involved in lipid signaling and biosynthesis. Acts as an epoxidase converting cholesta-5,24-dien-3beta-ol/desmosterol into (24S),25-epoxycholesterol, an abundant lipid ligand of nuclear NR1H2 and NR1H3 receptors shown to promote neurogenesis in developing brain. May also catalyze the oxidative metabolism of xenobiotics, such as clotrimazole. The chain is Cholesterol 24-hydroxylase from Mus musculus (Mouse).